Consider the following 334-residue polypeptide: Biotin synthase (334 aa).

One can recognise a Radical SAM core domain in the interval 41 to 260 (TRLETASLLS…IAVARIMMPR (220 aa)). 3 residues coordinate [4Fe-4S] cluster: cysteine 56, cysteine 60, and cysteine 63. [2Fe-2S] cluster contacts are provided by cysteine 100, cysteine 131, cysteine 191, and arginine 264.

This sequence belongs to the radical SAM superfamily. Biotin synthase family. In terms of assembly, homodimer. [4Fe-4S] cluster serves as cofactor. [2Fe-2S] cluster is required as a cofactor.

The enzyme catalyses (4R,5S)-dethiobiotin + (sulfur carrier)-SH + 2 reduced [2Fe-2S]-[ferredoxin] + 2 S-adenosyl-L-methionine = (sulfur carrier)-H + biotin + 2 5'-deoxyadenosine + 2 L-methionine + 2 oxidized [2Fe-2S]-[ferredoxin]. Its pathway is cofactor biosynthesis; biotin biosynthesis; biotin from 7,8-diaminononanoate: step 2/2. In terms of biological role, catalyzes the conversion of dethiobiotin (DTB) to biotin by the insertion of a sulfur atom into dethiobiotin via a radical-based mechanism. This Bradyrhizobium sp. (strain ORS 278) protein is Biotin synthase.